Reading from the N-terminus, the 97-residue chain is Prophage lipoprotein Bor homolog (97 aa).

Positions 1–16 (MKKMLLATALALLITG) are cleaved as a signal peptide. Cysteine 17 is lipidated: N-palmitoyl cysteine. A lipid anchor (S-diacylglycerol cysteine) is attached at cysteine 17.

Belongs to the lambda phage bor family.

The protein localises to the cell membrane. This chain is Prophage lipoprotein Bor homolog (borD), found in Escherichia coli (strain K12).